A 166-amino-acid chain; its full sequence is MASGVTVNDEVIKVFNDMKVRKSSTQEEIKKRKKAVLFCLSDDKRQIIVEEAKQILVGDIGDTVEDPYTSFVKLLPLNDCRYALYDATYETKESKKEDLVFIFWAPESAPLKSKMIYASSKDAIKKKFTGIKHEWQVNGLDDIKDRSTLGEKLGGNVVVSLEGKPL.

The residue at position 2 (Ala-2) is an N-acetylalanine. Ser-3 bears the Phosphoserine mark. The 150-residue stretch at 4–153 (GVTVNDEVIK…KDRSTLGEKL (150 aa)) folds into the ADF-H domain. Thr-6 is subject to Phosphothreonine. Positions 30 to 34 (KKRKK) match the Nuclear localization signal motif.

This sequence belongs to the actin-binding proteins ADF family. In terms of processing, the phosphorylation of Ser-24 may prevent recognition of the nuclear localization signal.

The protein localises to the nucleus matrix. The protein resides in the cytoplasm. It localises to the cytoskeleton. In terms of biological role, controls reversibly actin polymerization and depolymerization in a pH-sensitive manner. It has the ability to bind G- and F-actin in a 1:1 ratio of cofilin to actin. It is the major component of intranuclear and cytoplasmic actin rods. The polypeptide is Cofilin-2 (CFL2) (Bos taurus (Bovine)).